Consider the following 271-residue polypeptide: uncharacterized protein (271 aa).

2 disordered regions span residues 50–93 (KKKT…SSSL) and 128–233 (KNNY…RKKV). 2 stretches are compositionally biased toward low complexity: residues 61-93 (SPTKPLSTSIPTTTTAATSQSITSTSLSSSSSL) and 129-165 (NNYNNYNNNNNNNNNNNNNNNNNNNNNNNNNNNNNNN). Basic and acidic residues predominate over residues 169–179 (TDKKEGEKNEN). Composition is skewed to acidic residues over residues 180–199 (ENENENENENENENENDIIE) and 207–217 (MDEELENEQVE).

This is an uncharacterized protein from Dictyostelium discoideum (Social amoeba).